A 2208-amino-acid polypeptide reads, in one-letter code: Glutamate synthase 1 [NADH], chloroplastic (2208 aa).

The N-terminal 49 residues, 1-49, are a transit peptide targeting the chloroplast; it reads MSAASSSSVLHLRTNQQLLSLRSLKNSTSVASQLAVTSGVSRRRSCTAR. The Nucleophile role is filled by Cys117. The Glutamine amidotransferase type-2 domain maps to 117-521; sequence CGVGFVAELS…PGMMLLVDFE (405 aa). Positions 1040–1067 are disordered; the sequence is GKSNTGEGGELPSRMEPLADGSRNPKRS. 1211–1268 is a binding site for FMN; the sequence is LAETHQTLVANDLRGRTVLQTDGQLKTGRDVAVAALLGAEEFGFSTAPLITLGCIMMR. [3Fe-4S] cluster contacts are provided by Cys1264, Cys1270, and Cys1275. Position 1995–2009 (1995–2009) interacts with NAD(+); that stretch reads GGGDTGTDCIGTSIR.

Belongs to the glutamate synthase family. In terms of assembly, monomer. [3Fe-4S] cluster serves as cofactor. It depends on FAD as a cofactor. The cofactor is FMN. In terms of tissue distribution, highly expressed in roots and at low levels in leaves.

Its subcellular location is the plastid. It localises to the chloroplast. The enzyme catalyses 2 L-glutamate + NAD(+) = L-glutamine + 2-oxoglutarate + NADH + H(+). Its pathway is amino-acid biosynthesis; L-glutamate biosynthesis via GLT pathway; L-glutamate from 2-oxoglutarate and L-glutamine (NAD(+) route): step 1/1. It functions in the pathway energy metabolism; nitrogen metabolism. Involved in glutamate biosynthesis. Required for non-photorespiratory ammonium assimilation. Probably involved in primary ammonium assimilation in roots. This chain is Glutamate synthase 1 [NADH], chloroplastic (GLT1), found in Arabidopsis thaliana (Mouse-ear cress).